The chain runs to 190 residues: Dynein axonemal light chain 1 (190 aa).

A2 bears the N-acetylalanine mark. LRR repeat units follow at residues 49–70 (NCEK…NGLK), 71–92 (NLRI…EAVG), 94–115 (TLEE…HVMK), and 116–137 (KLKI…VKLA). S56 is subject to Phosphoserine. Residues 150–190 (NPLEEKHSAEGNWVEEATKRVPKLKKLDGTPVIKEDEEEDN) form the LRRCT domain.

The protein belongs to the dynein light chain LC1-type family. Interacts with ZMYND10 (via C-terminus). Interacts with DNAH5, a outer arm dynein heavy chain. Interacts with tubulin located within the A-tubule of the outer doublets in a ATP-independent manner.

Its subcellular location is the cytoplasm. The protein localises to the cytoskeleton. It is found in the cilium axoneme. Its function is as follows. Part of the multisubunit axonemal ATPase complexes that generate the force for cilia motility and govern beat frequency. Component of the outer arm dynein (ODA). May be involved in a mechanosensory feedback mechanism controlling ODA activity based on external conformational cues by tethering the outer arm dynein heavy chain (DNAH5) to the microtubule within the axoneme. Important for ciliary function in the airways and for the function of the cilia that produce the nodal flow essential for the determination of the left-right asymmetry. In Bos taurus (Bovine), this protein is Dynein axonemal light chain 1 (DNAL1).